Here is a 133-residue protein sequence, read N- to C-terminus: Pheromone-regulated membrane protein 3 (133 aa).

The Nuclear segment spans residues 1–104 (MTAMKEDNAA…SKVQRENKGS (104 aa)). The segment at 36 to 100 (ADGFVINKAK…DASESKVQRE (65 aa)) is disordered. Positions 69–75 (GRVRKHK) match the Bipartite nuclear localization signal motif. The segment covering 90 to 100 (KDASESKVQRE) has biased composition (basic and acidic residues). A helical transmembrane segment spans residues 105-127 (FYQGAIFGSFLGAAVTTVLSNLA). Residues 128–133 (VKALQN) are Perinuclear space-facing.

Interacts with KAR5.

It localises to the nucleus outer membrane. It is found in the cytoplasm. The protein resides in the cytoskeleton. The protein localises to the microtubule organizing center. Its subcellular location is the spindle pole body. Its function is as follows. Required for the fusion of nuclear envelopes during mating, ensuring proper karyogamy. Plays a role in the initiation of outer nuclear envelope fusion. The chain is Pheromone-regulated membrane protein 3 (PRM3) from Saccharomyces cerevisiae (strain ATCC 204508 / S288c) (Baker's yeast).